The following is a 189-amino-acid chain: UPF0688 protein C1orf174 homolog (189 aa).

The segment at 53-137 is disordered; it reads QMAGDGGEAK…TTDPSVFFDE (85 aa). 2 stretches are compositionally biased toward basic and acidic residues: residues 59–73 and 93–103; these read GEAKRLPKRPFHGEV and APGERRGKENS.

The protein belongs to the UPF0688 family.

It is found in the nucleus. The protein is UPF0688 protein C1orf174 homolog of Danio rerio (Zebrafish).